We begin with the raw amino-acid sequence, 371 residues long: Cysteine endopeptidase Rep1 (371 aa).

A signal peptide spans 1-28 (MGRVISSWRVLAVVAALMAMAAVELCAA). Residues 29-133 (IPFDERDLES…LPGFMYEGVR (105 aa)) constitute a propeptide, activation peptide. 3 disulfide bridges follow: cysteine 156–cysteine 198, cysteine 190–cysteine 231, and cysteine 290–cysteine 342. Cysteine 159 is a catalytic residue. A glycan (N-linked (GlcNAc...) asparagine) is linked at asparagine 228. Residues histidine 296 and asparagine 317 contribute to the active site.

Belongs to the peptidase C1 family. As to expression, expressed in germinating seeds.

It localises to the protein storage vacuole. Its function is as follows. Cysteine endopeptidase that digests in vitro both the acidic and basic subunits of glutelin, the major seed storage protein of rice. Acts as a negative regulator of cell death. This chain is Cysteine endopeptidase Rep1, found in Oryza sativa subsp. japonica (Rice).